The primary structure comprises 310 residues: Ribonuclease Z (310 aa).

7 residues coordinate Zn(2+): H64, H66, D68, H69, H146, D215, and H273. Catalysis depends on D68, which acts as the Proton acceptor.

This sequence belongs to the RNase Z family. In terms of assembly, homodimer. Requires Zn(2+) as cofactor.

It carries out the reaction Endonucleolytic cleavage of RNA, removing extra 3' nucleotides from tRNA precursor, generating 3' termini of tRNAs. A 3'-hydroxy group is left at the tRNA terminus and a 5'-phosphoryl group is left at the trailer molecule.. Zinc phosphodiesterase, which displays some tRNA 3'-processing endonuclease activity. Probably involved in tRNA maturation, by removing a 3'-trailer from precursor tRNA. In Aeropyrum pernix (strain ATCC 700893 / DSM 11879 / JCM 9820 / NBRC 100138 / K1), this protein is Ribonuclease Z.